Consider the following 322-residue polypeptide: Glycerate dehydrogenase (322 aa).

NAD(+) is bound by residues Ser158–Ile159, Asp178, Thr239–Arg241, and Asp265. The active site involves Arg241. Residue Glu270 is part of the active site. His288 acts as the Proton donor in catalysis. Position 288–291 (His288–Ser291) interacts with NAD(+).

Belongs to the D-isomer specific 2-hydroxyacid dehydrogenase family. Homodimer.

It catalyses the reaction (R)-glycerate + NAD(+) = 3-hydroxypyruvate + NADH + H(+). Its pathway is one-carbon metabolism; formaldehyde assimilation via serine pathway. Functionally, active on hydroxypyruvate and glyoxylate. This is Glycerate dehydrogenase from Hyphomicrobium methylovorum.